The primary structure comprises 370 residues: N-acyl-L-amino acid amidohydrolase (370 aa).

Belongs to the peptidase M20 family. Homotetramer. Co(2+) serves as cofactor.

The enzyme catalyses an N-acyl-L-amino acid + H2O = an L-alpha-amino acid + a carboxylate. It carries out the reaction an N-acetyl-L-cysteine-S-conjugate + H2O = an S-substituted L-cysteine + acetate. Functionally, hydrolyzes most efficiently N-acetyl derivatives of aromatic amino acids but is also active on other amino acids. L-stereospecific. The chain is N-acyl-L-amino acid amidohydrolase (amaA) from Geobacillus stearothermophilus (Bacillus stearothermophilus).